The primary structure comprises 198 residues: Alkyl hydroperoxide reductase C (198 aa).

Positions 2–163 (TLVTQKAPNF…MIRMIDALNF (162 aa)) constitute a Thioredoxin domain. Cys-50 acts as the Cysteine sulfenic acid (-SOH) intermediate in catalysis.

This sequence belongs to the peroxiredoxin family. AhpC/Prx1 subfamily. In terms of assembly, homodimer; disulfide-linked, upon oxidation. 5 homodimers assemble to form a ring-like decamer.

It localises to the cytoplasm. It carries out the reaction a hydroperoxide + NADH + H(+) = an alcohol + NAD(+) + H2O. Functionally, thiol-specific peroxidase that catalyzes the reduction of hydrogen peroxide and organic hydroperoxides to water and alcohols, respectively. Plays a role in cell protection against oxidative stress by detoxifying peroxides. This chain is Alkyl hydroperoxide reductase C, found in Buchnera aphidicola subsp. Schizaphis graminum (strain Sg).